A 147-amino-acid chain; its full sequence is Probable disulfide formation protein (147 aa).

The helical transmembrane segment at Asn-9–Tyr-28 threads the bilayer. An intrachain disulfide couples Cys-38 to Cys-41. 2 helical membrane passes run Tyr-43 to Thr-62 and Tyr-69 to Leu-86. Cys-99 and Cys-106 are oxidised to a cystine. The chain crosses the membrane as a helical span at residues Gly-115–Phe-138.

It belongs to the DsbB family. BdbC subfamily.

It is found in the cell inner membrane. Required for disulfide bond formation in some proteins. The polypeptide is Probable disulfide formation protein (Coxiella burnetii (strain CbuG_Q212) (Coxiella burnetii (strain Q212))).